The following is a 365-amino-acid chain: Chorismate synthase (365 aa).

NADP(+) is bound by residues R48 and R54. FMN is bound by residues 131–133 (RSS), 243–244 (NA), G288, 303–307 (KPTSS), and R329.

The protein belongs to the chorismate synthase family. As to quaternary structure, homotetramer. FMNH2 serves as cofactor.

It carries out the reaction 5-O-(1-carboxyvinyl)-3-phosphoshikimate = chorismate + phosphate. It functions in the pathway metabolic intermediate biosynthesis; chorismate biosynthesis; chorismate from D-erythrose 4-phosphate and phosphoenolpyruvate: step 7/7. Functionally, catalyzes the anti-1,4-elimination of the C-3 phosphate and the C-6 proR hydrogen from 5-enolpyruvylshikimate-3-phosphate (EPSP) to yield chorismate, which is the branch point compound that serves as the starting substrate for the three terminal pathways of aromatic amino acid biosynthesis. This reaction introduces a second double bond into the aromatic ring system. This is Chorismate synthase from Agrobacterium fabrum (strain C58 / ATCC 33970) (Agrobacterium tumefaciens (strain C58)).